We begin with the raw amino-acid sequence, 205 residues long: StAR-related lipid transfer protein 4 (205 aa).

In terms of domain architecture, START spans Met1 to Leu205.

The enzyme catalyses cholesterol(in) = cholesterol(out). In terms of biological role, involved in the intracellular transport of cholesterol. Binds cholesterol or other sterols. The polypeptide is StAR-related lipid transfer protein 4 (STARD4) (Homo sapiens (Human)).